The following is a 56-amino-acid chain: Large ribosomal subunit protein bL32 (56 aa).

The interval 1–37 is disordered; the sequence is MAVQQNKKSRSRRDMRRSHDALTTAAVSVDKASGETH. The span at 7–16 shows a compositional bias: basic residues; it reads KKSRSRRDMR.

The protein belongs to the bacterial ribosomal protein bL32 family.

This chain is Large ribosomal subunit protein bL32, found in Haemophilus influenzae (strain PittEE).